Consider the following 409-residue polypeptide: Tryptophan synthase beta chain (409 aa).

Lysine 98 bears the N6-(pyridoxal phosphate)lysine mark.

This sequence belongs to the TrpB family. Tetramer of two alpha and two beta chains. Pyridoxal 5'-phosphate serves as cofactor.

It carries out the reaction (1S,2R)-1-C-(indol-3-yl)glycerol 3-phosphate + L-serine = D-glyceraldehyde 3-phosphate + L-tryptophan + H2O. Its pathway is amino-acid biosynthesis; L-tryptophan biosynthesis; L-tryptophan from chorismate: step 5/5. In terms of biological role, the beta subunit is responsible for the synthesis of L-tryptophan from indole and L-serine. This chain is Tryptophan synthase beta chain (trpB), found in Cereibacter sphaeroides (strain ATCC 17023 / DSM 158 / JCM 6121 / CCUG 31486 / LMG 2827 / NBRC 12203 / NCIMB 8253 / ATH 2.4.1.) (Rhodobacter sphaeroides).